Consider the following 244-residue polypeptide: 14-3-3 protein homolog 1 (244 aa).

The protein belongs to the 14-3-3 family.

The polypeptide is 14-3-3 protein homolog 1 (Echinococcus granulosus (Hydatid tapeworm)).